A 337-amino-acid chain; its full sequence is MQKSLITKWLCISCIMVIATIVIGGITRLTGSGLSIVEWRPVTGILPPFSFESWQSEFAKYKAFPEYNSVNYGITLSQFKFIYLLEFIHRLLGRITALIYIVPLIYFYFKDVIKNRDMLPYIIALLLFCIQGFIGWYMVKSGLLNSPYVSHFRLAFHLIIAVIIYHILFYQLIKNRCDILLILSQTDFKLPLIFSGIAITVVYVQIFLGALVAGLDAGLIYNSFPLMDDRFIPMEIKDNFFDLKNWYDPVFIQFIHRLVGYSVFLVVVVLIICLLKIEHPKLNKIAYFLMIVLFMQVSTGIITLLYSVPIIIASIHQLFAIILLSIIIWCYFLIKSS.

5 consecutive transmembrane segments (helical) span residues 6-26 (ITKWLCISCIMVIATIVIGGI), 87-107 (FIHRLLGRITALIYIVPLIYF), 119-139 (LPYIIALLLFCIQGFIGWYMV), 154-174 (LAFHLIIAVIIYHILFYQLIK), and 192-212 (LIFSGIAITVVYVQIFLGALV). Position 256 (His-256) interacts with heme. The next 3 helical transmembrane spans lie at 258–278 (LVGYSVFLVVVVLIICLLKIE), 285–305 (IAYFLMIVLFMQVSTGIITLL), and 308–328 (VPIIIASIHQLFAIILLSIII). A heme-binding site is contributed by His-316.

This sequence belongs to the COX15/CtaA family. Type 2 subfamily. As to quaternary structure, interacts with CtaB. The cofactor is heme b.

It is found in the cell membrane. It carries out the reaction Fe(II)-heme o + 2 A + H2O = Fe(II)-heme a + 2 AH2. Its pathway is porphyrin-containing compound metabolism; heme A biosynthesis; heme A from heme O: step 1/1. Catalyzes the conversion of heme O to heme A by two successive hydroxylations of the methyl group at C8. The first hydroxylation forms heme I, the second hydroxylation results in an unstable dihydroxymethyl group, which spontaneously dehydrates, resulting in the formyl group of heme A. This chain is Heme A synthase, found in Rickettsia africae (strain ESF-5).